The sequence spans 199 residues: Auxin-responsive protein IAA1 (199 aa).

The EAR-like (transcriptional repression) signature appears at 25–29 (LTLRL). Positions 31–74 (GSLAAAAAPDPDRKRSSPSSSDAADAADNSSPLAAAADAPPAPK) are disordered. Positions 47 to 69 (SPSSSDAADAADNSSPLAAAADA) are enriched in low complexity. The region spanning 93–187 (AKFVKVAVDG…TCQRLRLMKS (95 aa)) is the PB1 domain.

This sequence belongs to the Aux/IAA family. In terms of assembly, homodimers and heterodimers. As to expression, highly expressed in flowers. Expressed at low levels in roots and shoots.

The protein resides in the nucleus. Its function is as follows. Aux/IAA proteins are short-lived transcriptional factors that function as repressors of early auxin response genes at low auxin concentrations. The protein is Auxin-responsive protein IAA1 (IAA1) of Oryza sativa subsp. japonica (Rice).